The primary structure comprises 337 residues: Large ribosomal subunit protein uL3 (337 aa).

The interval M1–A20 is disordered.

Belongs to the universal ribosomal protein uL3 family. As to quaternary structure, part of the 50S ribosomal subunit. Forms a cluster with proteins L14 and L24e.

One of the primary rRNA binding proteins, it binds directly near the 3'-end of the 23S rRNA, where it nucleates assembly of the 50S subunit. In Methanosarcina mazei (strain ATCC BAA-159 / DSM 3647 / Goe1 / Go1 / JCM 11833 / OCM 88) (Methanosarcina frisia), this protein is Large ribosomal subunit protein uL3.